Reading from the N-terminus, the 127-residue chain is Small ribosomal subunit protein uS11 (127 aa).

It belongs to the universal ribosomal protein uS11 family. Part of the 30S ribosomal subunit. Interacts with proteins S7 and S18. Binds to IF-3.

In terms of biological role, located on the platform of the 30S subunit, it bridges several disparate RNA helices of the 16S rRNA. Forms part of the Shine-Dalgarno cleft in the 70S ribosome. In Streptococcus pyogenes serotype M49 (strain NZ131), this protein is Small ribosomal subunit protein uS11.